The primary structure comprises 427 residues: MYSYIVEGGFKIGGQITASGNKNSALPCILAALLTNEDVILENIPNINDVKVVLDILSDIGADIVREGNALKIKVSNIVKTEIDSSFTDLIRASILLLGPFVSRFGEIDMALPGGDVIGKRRLDTHFYGLSKLGAKLINKDGRIVLKAKKLVGAEMFLDEASVTATENIIMASVLAEGNTVIMNAACEPHVQDLCNMLNSMGANILGIGSNVLEIKGVKKLRGTTFRIGADFMQVGSLISLAALTGGELEIKKADPQHFRLIRHIYSRLGINFEYDKENVYVRDKQELKVKLDFGGHIPKIDDGPWPAFPTDLMSIIIVTATQVEGTVLVFEKMFESRMFFVDKLIKMGAQIVLCDPHRVVVTGKSPLKGNVLSSPDVRAGMSLLIAAFVAEGRSEIQNVYQIERGYEDVANKLINLGAKIKKVKSQ.

22 to 23 is a phosphoenolpyruvate binding site; the sequence is KN. Arg92 contributes to the UDP-N-acetyl-alpha-D-glucosamine binding site. Asp116 functions as the Proton donor in the catalytic mechanism. Residues Asp312 and Met334 each contribute to the UDP-N-acetyl-alpha-D-glucosamine site.

It belongs to the EPSP synthase family. MurA subfamily.

It is found in the cytoplasm. It catalyses the reaction phosphoenolpyruvate + UDP-N-acetyl-alpha-D-glucosamine = UDP-N-acetyl-3-O-(1-carboxyvinyl)-alpha-D-glucosamine + phosphate. The protein operates within cell wall biogenesis; peptidoglycan biosynthesis. Its function is as follows. Cell wall formation. Adds enolpyruvyl to UDP-N-acetylglucosamine. The protein is UDP-N-acetylglucosamine 1-carboxyvinyltransferase of Borrelia garinii subsp. bavariensis (strain ATCC BAA-2496 / DSM 23469 / PBi) (Borreliella bavariensis).